A 254-amino-acid chain; its full sequence is Vitamin B12 import ATP-binding protein BtuD (254 aa).

One can recognise an ABC transporter domain in the interval 1 to 239 (MHINHISVGN…ENLQQVFETP (239 aa)). 29 to 36 (GPNGSGKS) lines the ATP pocket.

This sequence belongs to the ABC transporter superfamily. Vitamin B12 importer (TC 3.A.1.13.1) family. As to quaternary structure, the complex is composed of two ATP-binding proteins (BtuD), two transmembrane proteins (BtuC) and a solute-binding protein (BtuF).

It is found in the cell inner membrane. It catalyses the reaction an R-cob(III)alamin(out) + ATP + H2O = an R-cob(III)alamin(in) + ADP + phosphate + H(+). Its function is as follows. Part of the ABC transporter complex BtuCDF involved in vitamin B12 import. Responsible for energy coupling to the transport system. This chain is Vitamin B12 import ATP-binding protein BtuD, found in Vibrio vulnificus (strain YJ016).